A 247-amino-acid chain; its full sequence is Segregation and condensation protein A (247 aa).

This sequence belongs to the ScpA family. As to quaternary structure, component of a cohesin-like complex composed of ScpA, ScpB and the Smc homodimer, in which ScpA and ScpB bind to the head domain of Smc. The presence of the three proteins is required for the association of the complex with DNA.

It is found in the cytoplasm. Participates in chromosomal partition during cell division. May act via the formation of a condensin-like complex containing Smc and ScpB that pull DNA away from mid-cell into both cell halves. The protein is Segregation and condensation protein A of Bacillus cereus (strain 03BB102).